Reading from the N-terminus, the 78-residue chain is Protein SlyX homolog (78 aa).

The protein belongs to the SlyX family.

In Photobacterium profundum (strain SS9), this protein is Protein SlyX homolog.